The primary structure comprises 778 residues: Serine/threonine-protein kinase BRSK1 (778 aa).

Positions 1 to 12 (MSSGSKEGGGGS) are enriched in gly residues. A disordered region spans residues 1–29 (MSSGSKEGGGGSPAYHLPHPHPHPPQHAQ). In terms of domain architecture, Protein kinase spans 34 to 285 (YRLEKTLGKG…LEQIQKHPWY (252 aa)). ATP-binding positions include 40 to 48 (LGKGQTGLV) and lysine 63. Aspartate 156 acts as the Proton acceptor in catalysis. A Phosphothreonine; by LKB1 modification is found at threonine 189. Positions 314–356 (ELDPDVLESMASLGCFRDRERLHRELRSEEENQEKMIYYLLLD) constitute a UBA domain. Residues 362-383 (PSCEDQDLPPRNDVDPPRKRVD) are compositionally biased toward basic and acidic residues. The interval 362–548 (PSCEDQDLPP…SPGGGVGGAA (187 aa)) is disordered. Residues serine 399, serine 443, serine 447, and serine 450 each carry the phosphoserine modification. Low complexity predominate over residues 430–457 (SRSVSGASTGLSSSPLSSPRSPVFSFSP). 4 positions are modified to omega-N-methylarginine: arginine 466, arginine 481, arginine 484, and arginine 498. Residues 491–508 (QPPPPSARSTPLPGPPGS) are compositionally biased toward pro residues. Serine 508 carries the phosphoserine modification. Residues 509–533 (PRSSGGTPLHSPLHTPRASPTGTPG) are compositionally biased toward low complexity. An Omega-N-methylarginine modification is found at arginine 525. Threonine 529 and threonine 535 each carry phosphothreonine. Arginine 550 is modified (omega-N-methylarginine). The segment at 560 to 588 (FLGSPRFHRRKMQVPTAEEMSSLTPESSP) is disordered. Threonine 583 is subject to Phosphothreonine. Phosphoserine occurs at positions 586, 587, and 601. The segment at 719-778 (QPSVQALADEKNGAQTRPAGTPPRSLQPPPGRSDPDLSSSPRRGPPKDKKLLATNGTPLP) is disordered.

Belongs to the protein kinase superfamily. CAMK Ser/Thr protein kinase family. SNF1 subfamily. Mg(2+) is required as a cofactor. Post-translationally, phosphorylated at Thr-189 by STK11/LKB1 in complex with STE20-related adapter-alpha (STRADA) pseudo kinase and CAB39. Not phosphorylated at Thr-189 by CaMKK2. In contrast, it is phosphorylated and activated by CaMKK1. May be inactivated via dephosphorylation of Thr-189 by PP2C. Present in the gray matter of the brain and spinal cord (at protein level). Expressed in the nervous system, distributed within the brain and spinal cord of embryonic and postnatal animals.

The protein resides in the cytoplasm. Its subcellular location is the nucleus. It localises to the cytoskeleton. The protein localises to the microtubule organizing center. It is found in the centrosome. The protein resides in the synapse. Its subcellular location is the presynaptic active zone. It localises to the cytoplasmic vesicle. The protein localises to the secretory vesicle. It is found in the synaptic vesicle. The enzyme catalyses L-seryl-[protein] + ATP = O-phospho-L-seryl-[protein] + ADP + H(+). The catalysed reaction is L-threonyl-[protein] + ATP = O-phospho-L-threonyl-[protein] + ADP + H(+). It carries out the reaction L-seryl-[tau protein] + ATP = O-phospho-L-seryl-[tau protein] + ADP + H(+). It catalyses the reaction L-threonyl-[tau protein] + ATP = O-phospho-L-threonyl-[tau protein] + ADP + H(+). Its activity is regulated as follows. Activated by phosphorylation on Thr-189 by STK11/LKB1. Functionally, serine/threonine-protein kinase that plays a key role in polarization of neurons and centrosome duplication. Phosphorylates CDC25B, CDC25C, MAPT/TAU, RIMS1, TUBG1, TUBG2 and WEE1. Following phosphorylation and activation by STK11/LKB1, acts as a key regulator of polarization of cortical neurons, probably by mediating phosphorylation of microtubule-associated proteins such as MAPT/TAU at 'Thr-504' and 'Ser-554'. Also regulates neuron polarization by mediating phosphorylation of WEE1 at 'Ser-642' in postmitotic neurons, leading to down-regulate WEE1 activity in polarized neurons. In neurons, localizes to synaptic vesicles and plays a role in neurotransmitter release, possibly by phosphorylating RIMS1. Also acts as a positive regulator of centrosome duplication by mediating phosphorylation of gamma-tubulin (TUBG1 and TUBG2) at 'Ser-131', leading to translocation of gamma-tubulin and its associated proteins to the centrosome. Involved in the UV-induced DNA damage checkpoint response, probably by inhibiting CDK1 activity through phosphorylation and activation of WEE1, and inhibition of CDC25B and CDC25C. In Mus musculus (Mouse), this protein is Serine/threonine-protein kinase BRSK1 (Brsk1).